The chain runs to 313 residues: Protoheme IX farnesyltransferase (313 aa).

Helical transmembrane passes span valine 34 to valine 54, proline 56 to leucine 76, histidine 105 to threonine 125, leucine 128 to leucine 148, threonine 152 to serine 172, alanine 173 to threonine 193, valine 237 to leucine 257, and tyrosine 291 to leucine 311.

The protein belongs to the UbiA prenyltransferase family. Protoheme IX farnesyltransferase subfamily.

The protein resides in the cell membrane. The enzyme catalyses heme b + (2E,6E)-farnesyl diphosphate + H2O = Fe(II)-heme o + diphosphate. The protein operates within porphyrin-containing compound metabolism; heme O biosynthesis; heme O from protoheme: step 1/1. Functionally, converts heme B (protoheme IX) to heme O by substitution of the vinyl group on carbon 2 of heme B porphyrin ring with a hydroxyethyl farnesyl side group. In Mycolicibacterium gilvum (strain PYR-GCK) (Mycobacterium gilvum (strain PYR-GCK)), this protein is Protoheme IX farnesyltransferase.